Reading from the N-terminus, the 120-residue chain is Large ribosomal subunit protein bL12 (120 aa).

This sequence belongs to the bacterial ribosomal protein bL12 family. Homodimer. Part of the ribosomal stalk of the 50S ribosomal subunit. Forms a multimeric L10(L12)X complex, where L10 forms an elongated spine to which 2 to 4 L12 dimers bind in a sequential fashion. Binds GTP-bound translation factors.

Forms part of the ribosomal stalk which helps the ribosome interact with GTP-bound translation factors. Is thus essential for accurate translation. In Lactobacillus acidophilus (strain ATCC 700396 / NCK56 / N2 / NCFM), this protein is Large ribosomal subunit protein bL12.